The sequence spans 269 residues: Formamidopyrimidine-DNA glycosylase (269 aa).

P2 acts as the Schiff-base intermediate with DNA in catalysis. E3 acts as the Proton donor in catalysis. K57 functions as the Proton donor; for beta-elimination activity in the catalytic mechanism. H90, R109, and K150 together coordinate DNA. An FPG-type zinc finger spans residues 235–269; it reads QVYGRKGEPCRVCGTPIVASKHAQRATFYCRQCQK. The Proton donor; for delta-elimination activity role is filled by R259.

This sequence belongs to the FPG family. In terms of assembly, monomer. Zn(2+) serves as cofactor.

It catalyses the reaction Hydrolysis of DNA containing ring-opened 7-methylguanine residues, releasing 2,6-diamino-4-hydroxy-5-(N-methyl)formamidopyrimidine.. It carries out the reaction 2'-deoxyribonucleotide-(2'-deoxyribose 5'-phosphate)-2'-deoxyribonucleotide-DNA = a 3'-end 2'-deoxyribonucleotide-(2,3-dehydro-2,3-deoxyribose 5'-phosphate)-DNA + a 5'-end 5'-phospho-2'-deoxyribonucleoside-DNA + H(+). Involved in base excision repair of DNA damaged by oxidation or by mutagenic agents. Acts as a DNA glycosylase that recognizes and removes damaged bases. Has a preference for oxidized purines, such as 7,8-dihydro-8-oxoguanine (8-oxoG). Has AP (apurinic/apyrimidinic) lyase activity and introduces nicks in the DNA strand. Cleaves the DNA backbone by beta-delta elimination to generate a single-strand break at the site of the removed base with both 3'- and 5'-phosphates. The chain is Formamidopyrimidine-DNA glycosylase from Enterobacter sp. (strain 638).